The chain runs to 37 residues: MIEVFLFGIVLGLIPITLTGLFVTAYLQYRRGDQLDL.

The chain crosses the membrane as a helical span at residues F5–A25.

The protein belongs to the PetG family. In terms of assembly, the 4 large subunits of the cytochrome b6-f complex are cytochrome b6, subunit IV (17 kDa polypeptide, PetD), cytochrome f and the Rieske protein, while the 4 small subunits are PetG, PetL, PetM and PetN. The complex functions as a dimer.

It localises to the plastid. The protein localises to the chloroplast thylakoid membrane. In terms of biological role, component of the cytochrome b6-f complex, which mediates electron transfer between photosystem II (PSII) and photosystem I (PSI), cyclic electron flow around PSI, and state transitions. PetG is required for either the stability or assembly of the cytochrome b6-f complex. This chain is Cytochrome b6-f complex subunit 5, found in Phalaenopsis aphrodite subsp. formosana (Moth orchid).